The following is a 365-amino-acid chain: Ribosomal RNA large subunit methyltransferase F (365 aa).

Residues 1-49 form a disordered region; the sequence is MSKPAVKSVQSATAKTATRAVNIRQKVKAPKQAKPEAKGRVRPSKDKPR. Positions 33-49 are enriched in basic and acidic residues; it reads AKPEAKGRVRPSKDKPR.

This sequence belongs to the methyltransferase superfamily. METTL16/RlmF family.

It localises to the cytoplasm. The enzyme catalyses adenosine(1618) in 23S rRNA + S-adenosyl-L-methionine = N(6)-methyladenosine(1618) in 23S rRNA + S-adenosyl-L-homocysteine + H(+). Its function is as follows. Specifically methylates the adenine in position 1618 of 23S rRNA. The polypeptide is Ribosomal RNA large subunit methyltransferase F (Shewanella baltica (strain OS185)).